We begin with the raw amino-acid sequence, 234 residues long: Probable ascorbate-specific transmembrane electron transporter 1 (234 aa).

The Cytoplasmic segment spans residues 1 to 9 (MGLGVRAAP). A helical transmembrane segment spans residues 10–30 (FTYVAHALAVAAATMVLVWCI). Residues 13 to 217 (VAHALAVAAA…FGASVVVAAV (205 aa)) form the Cytochrome b561 domain. The Extracellular segment spans residues 31–48 (HFRGGLAFEATNKNLIFN). A helical membrane pass occupies residues 49 to 69 (VHPVLMLIGYIILGSEAIMVY). His50 lines the heme b pocket. 65–73 (AIMVYKVLP) is an L-ascorbate binding site. Over 70-82 (KVLPTWKHDTTKL) the chain is Cytoplasmic. A helical transmembrane segment spans residues 83–103 (IHLILHAIALVFGAVGIYCAF). Heme b-binding residues include His84 and His118. Over 104–121 (KFHNESGIANLYSLHSWL) the chain is Extracellular. Monodehydro-L-ascorbate radical is bound at residue 114 to 123 (LYSLHSWLGI). The chain crosses the membrane as a helical span at residues 122–142 (GIGTICLYGIQWIFGFVAFFF). The Cytoplasmic portion of the chain corresponds to 143–151 (PRASPSVRK). Residues 152–172 (GVLPWHILFGLFVYILALATA) traverse the membrane as a helical segment. His157 contacts heme b. Residues 173-194 (ELGFLEKLTFLQSSGLDKYGAE) lie on the Extracellular side of the membrane. The chain crosses the membrane as a helical span at residues 195 to 215 (AFLVNFTALIVVLFGASVVVA). Residues 216-234 (AVSPARVEEPHEYAPIPES) are Cytoplasmic-facing.

It depends on heme b as a cofactor.

It is found in the membrane. Its function is as follows. Two-heme-containing cytochrome. Catalyzes ascorbate-dependent trans-membrane electron transfer by utilizing a concerted H(+)/e(-) transfer mechanism. The polypeptide is Probable ascorbate-specific transmembrane electron transporter 1 (Oryza sativa subsp. japonica (Rice)).